The chain runs to 350 residues: Biotin synthase (350 aa).

Residues 38–256 (NHVQVSTLLS…IAIARIMMPQ (219 aa)) form the Radical SAM core domain. Residues cysteine 53, cysteine 57, and cysteine 60 each coordinate [4Fe-4S] cluster. Residues cysteine 97, cysteine 128, cysteine 188, and arginine 260 each coordinate [2Fe-2S] cluster.

The protein belongs to the radical SAM superfamily. Biotin synthase family. In terms of assembly, homodimer. The cofactor is [4Fe-4S] cluster. [2Fe-2S] cluster serves as cofactor.

It carries out the reaction (4R,5S)-dethiobiotin + (sulfur carrier)-SH + 2 reduced [2Fe-2S]-[ferredoxin] + 2 S-adenosyl-L-methionine = (sulfur carrier)-H + biotin + 2 5'-deoxyadenosine + 2 L-methionine + 2 oxidized [2Fe-2S]-[ferredoxin]. The protein operates within cofactor biosynthesis; biotin biosynthesis; biotin from 7,8-diaminononanoate: step 2/2. Catalyzes the conversion of dethiobiotin (DTB) to biotin by the insertion of a sulfur atom into dethiobiotin via a radical-based mechanism. This Vibrio parahaemolyticus serotype O3:K6 (strain RIMD 2210633) protein is Biotin synthase.